A 382-amino-acid chain; its full sequence is Lipid-A-disaccharide synthase (382 aa).

Belongs to the LpxB family.

It catalyses the reaction 2-N,3-O-bis[(3R)-3-hydroxytetradecanoyl]-alpha-D-glucosaminyl 1-phosphate + UDP-2-N,3-O-bis[(3R)-3-hydroxytetradecanoyl]-alpha-D-glucosamine = lipid A disaccharide (E. coli) + UDP + H(+). It carries out the reaction a lipid X + a UDP-2-N,3-O-bis[(3R)-3-hydroxyacyl]-alpha-D-glucosamine = a lipid A disaccharide + UDP + H(+). It functions in the pathway glycolipid biosynthesis; lipid IV(A) biosynthesis; lipid IV(A) from (3R)-3-hydroxytetradecanoyl-[acyl-carrier-protein] and UDP-N-acetyl-alpha-D-glucosamine: step 5/6. In terms of biological role, condensation of UDP-2,3-diacylglucosamine and 2,3-diacylglucosamine-1-phosphate to form lipid A disaccharide, a precursor of lipid A, a phosphorylated glycolipid that anchors the lipopolysaccharide to the outer membrane of the cell. This is Lipid-A-disaccharide synthase from Escherichia coli (strain K12 / MC4100 / BW2952).